A 204-amino-acid polypeptide reads, in one-letter code: Spermatogenesis-associated protein 46 (204 aa).

The segment at 101-120 (SSSSQENTYPREANRKSKHG) is disordered.

As to expression, testis-specific.

The protein resides in the nucleus membrane. In terms of biological role, plays a role in spermiogenesis and fertilization. The polypeptide is Spermatogenesis-associated protein 46 (Spata46) (Mus musculus (Mouse)).